We begin with the raw amino-acid sequence, 429 residues long: Probable M18 family aminopeptidase 2 (429 aa).

His82, His156, and His401 together coordinate Zn(2+).

The protein belongs to the peptidase M18 family. It depends on Zn(2+) as a cofactor.

This Pseudomonas putida (strain ATCC 47054 / DSM 6125 / CFBP 8728 / NCIMB 11950 / KT2440) protein is Probable M18 family aminopeptidase 2.